The sequence spans 474 residues: Mitochondrial import inner membrane translocase subunit TIM44-1 (474 aa).

A mitochondrion-targeting transit peptide spans 1–54; sequence MAIRKIIRDLLITKQPLLRQLFHQRVLRANARSEFLPAIGYTSHRRFSVFTEFS. Residues 68–88 are a coiled coil; it reads ERTVKELKERTEEFKGVTEDL. The segment covering 132-143 has biased composition (basic and acidic residues); the sequence is VKESFKLGKEEN. A disordered region spans residues 132-165; sequence VKESFKLGKEENAESASSSGTRASQGEKQQSGST. Positions 145–165 are enriched in polar residues; sequence ESASSSGTRASQGEKQQSGST.

The protein belongs to the Tim44 family. Probable component of the PAM complex at least composed of a mitochondrial HSP70 protein, TIMM44 and TIMM14. The complex interacts with the TIMM23 component of the TIM17:23 complex. Expressed in roots, flowers, young cotyledons and leaves.

It is found in the mitochondrion inner membrane. Functionally, essential component of the PAM complex, a complex required for the translocation of transit peptide-containing proteins from the inner membrane into the mitochondrial matrix in an ATP-dependent manner. Recruits mitochondrial HSP70 to drive protein translocation into the matrix using ATP as an energy source. The sequence is that of Mitochondrial import inner membrane translocase subunit TIM44-1 (TIM44-1) from Arabidopsis thaliana (Mouse-ear cress).